The chain runs to 132 residues: Small ribosomal subunit protein uS11 (132 aa).

This sequence belongs to the universal ribosomal protein uS11 family. As to quaternary structure, part of the 30S ribosomal subunit.

Located on the platform of the 30S subunit. This chain is Small ribosomal subunit protein uS11 (rps11), found in Korarchaeum cryptofilum (strain OPF8).